The chain runs to 352 residues: NAD-dependent protein deacetylase sirtuin-2 (352 aa).

Position 16 is a phosphoserine (Ser16). Residues 20–301 (RLLDELTLEG…LALAELLGWK (282 aa)) form the Deacetylase sirtuin-type domain. NAD(+)-binding positions include 48 to 52 (AGIST) and 58 to 60 (DFR). Ser63 bears the Phosphoserine mark. 130 to 133 (QNID) contacts NAD(+). The active-site Proton acceptor is the His150. The Zn(2+) site is built by Cys158 and Cys163. Ser170 is subject to Phosphoserine. Cys184 and Cys187 together coordinate Zn(2+). NAD(+)-binding positions include 225–226 (TS), 249–251 (NKE), and Cys287. A disordered region spans residues 314-352 (SIDAQSGAGVPNPSTSASPKKSPPPAKDEARTTEREKPQ). The span at 324–333 (PNPSTSASPK) shows a compositional bias: low complexity. Phosphoserine occurs at positions 331 and 335. Residues 339–352 (AKDEARTTEREKPQ) show a composition bias toward basic and acidic residues.

Belongs to the sirtuin family. Class I subfamily. As to quaternary structure, interacts with CDC20, FOXO3 and FZR1. Associates with microtubules in primary cortical mature neurons. Homotrimer. Interacts (via both phosphorylated, unphosphorylated, active or inactive forms) with HDAC6; the interaction is necessary for the complex to interact with alpha-tubulin, suggesting that these proteins belong to a large complex that deacetylates the cytoskeleton. Interacts with FOXO1; the interaction is disrupted upon serum-starvation or oxidative stress, leading to increased level of acetylated FOXO1 and induction of autophagy. Interacts with RELA; the interaction occurs in the cytoplasm and is increased in a TNF-alpha-dependent manner. Interacts with HOXA10; the interaction is direct. Interacts with YWHAB and YWHAG; the interactions occur in a AKT-dependent manner and increase SIRT2-dependent TP53 deacetylation. Interacts with MAPK1/ERK2 and MAPK3/ERK1; the interactions increase SIRT2 stability and deacetylation activity. Interacts (phosphorylated form) with KMT5A isoform 2; the interaction is direct, stimulates KMT5A-mediated methyltransferase activity on histone at 'Lys-20' (H4K20me1) and is increased in a H(2)O(2)-induced oxidative stress-dependent manner. Interacts with G6PD; the interaction is enhanced by H(2)O(2) treatment. Interacts with a G1/S-specific cyclin E-CDK2 complex. Interacts with AURKA, CDK5R1 (p35 form) and CDK5 and HIF1A. Interacts with the tRNA ligase SARS1; recruited to the VEGFA promoter via interaction with SARS1. Interacts with BEX4; negatively regulates alpha-tubulin deacetylation by SIRT2. Interacts with MORN3; the interaction enhances the ubiquitination of p53/TP53. The cofactor is Zn(2+). Phosphorylated at phosphoserine and phosphothreonine. Phosphorylated at Ser-331 by a mitotic kinase CDK1/cyclin B at the G2/M transition; phosphorylation regulates the delay in cell-cycle progression. Phosphorylated at Ser-331 by a mitotic kinase G1/S-specific cyclin E/Cdk2 complex; phosphorylation inactivates SIRT2-mediated alpha-tubulin deacetylation and thereby negatively regulates cell adhesion, cell migration and neurite outgrowth during neuronal differentiation. Phosphorylated by cyclin A/Cdk2 and p35-Cdk5 complexes and to a lesser extent by the cyclin D3/Cdk4 and cyclin B/Cdk1, in vitro. Dephosphorylated at Ser-331 by CDC14A and CDC14B around early anaphase. Post-translationally, acetylated by EP300; acetylation leads both to the decreased of SIRT2-mediated alpha-tubulin deacetylase activity and SIRT2-mediated down-regulation of TP53 transcriptional activity. In terms of processing, ubiquitinated.

It is found in the nucleus. Its subcellular location is the cytoplasm. The protein resides in the perinuclear region. It localises to the cytoskeleton. The protein localises to the microtubule organizing center. It is found in the centrosome. Its subcellular location is the centriole. The protein resides in the spindle. It localises to the midbody. The protein localises to the chromosome. It is found in the perikaryon. Its subcellular location is the cell projection. The protein resides in the growth cone. It localises to the myelin membrane. It carries out the reaction N(6)-acetyl-L-lysyl-[protein] + NAD(+) + H2O = 2''-O-acetyl-ADP-D-ribose + nicotinamide + L-lysyl-[protein]. The enzyme catalyses N(6)-tetradecanoyl-L-lysyl-[protein] + NAD(+) + H2O = 2''-O-tetradecanoyl-ADP-D-ribose + nicotinamide + L-lysyl-[protein]. It catalyses the reaction N(6)-hexadecanoyl-L-lysyl-[protein] + NAD(+) + H2O = 2''-O-hexadecanoyl-ADP-D-ribose + nicotinamide + L-lysyl-[protein]. Its activity is regulated as follows. Inhibited by Sirtinol, A3 and M15 small molecules. Inhibited by nicotinamide. Inhibited by a macrocyclic peptide inhibitor S2iL5. Inhibited by EP300-induced acetylation. Its function is as follows. NAD-dependent protein deacetylase, which deacetylates internal lysines on histone and alpha-tubulin as well as many other proteins such as key transcription factors. Participates in the modulation of multiple and diverse biological processes such as cell cycle control, genomic integrity, microtubule dynamics, cell differentiation, metabolic networks, and autophagy. Plays a major role in the control of cell cycle progression and genomic stability. Functions in the antephase checkpoint preventing precocious mitotic entry in response to microtubule stress agents, and hence allowing proper inheritance of chromosomes. Positively regulates the anaphase promoting complex/cyclosome (APC/C) ubiquitin ligase complex activity by deacetylating CDC20 and FZR1, then allowing progression through mitosis. Associates both with chromatin at transcriptional start sites (TSSs) and enhancers of active genes. Plays a role in cell cycle and chromatin compaction through epigenetic modulation of the regulation of histone H4 'Lys-20' methylation (H4K20me1) during early mitosis. Specifically deacetylates histone H4 at 'Lys-16' (H4K16ac) between the G2/M transition and metaphase enabling H4K20me1 deposition by KMT5A leading to ulterior levels of H4K20me2 and H4K20me3 deposition throughout cell cycle, and mitotic S-phase progression. Deacetylates KMT5A modulating KMT5A chromatin localization during the mitotic stress response. Also deacetylates histone H3 at 'Lys-57' (H3K56ac) during the mitotic G2/M transition. During oocyte meiosis progression, may deacetylate histone H4 at 'Lys-16' (H4K16ac) and alpha-tubulin, regulating spindle assembly and chromosome alignment by influencing microtubule dynamics and kinetochore function. Deacetylates histone H4 at 'Lys-16' (H4K16ac) at the VEGFA promoter and thereby contributes to regulate expression of VEGFA, a key regulator of angiogenesis. Deacetylates alpha-tubulin at 'Lys-40' and hence controls neuronal motility, oligodendroglial cell arbor projection processes and proliferation of non-neuronal cells. Phosphorylation at Ser-368 by a G1/S-specific cyclin E-CDK2 complex inactivates SIRT2-mediated alpha-tubulin deacetylation, negatively regulating cell adhesion, cell migration and neurite outgrowth during neuronal differentiation. Deacetylates PARD3 and participates in the regulation of Schwann cell peripheral myelination formation during early postnatal development and during postinjury remyelination. Involved in several cellular metabolic pathways. Plays a role in the regulation of blood glucose homeostasis by deacetylating and stabilizing phosphoenolpyruvate carboxykinase PCK1 activity in response to low nutrient availability. Acts as a key regulator in the pentose phosphate pathway (PPP) by deacetylating and activating the glucose-6-phosphate G6PD enzyme, and therefore, stimulates the production of cytosolic NADPH to counteract oxidative damage. Maintains energy homeostasis in response to nutrient deprivation as well as energy expenditure by inhibiting adipogenesis and promoting lipolysis. Attenuates adipocyte differentiation by deacetylating and promoting FOXO1 interaction to PPARG and subsequent repression of PPARG-dependent transcriptional activity. Plays a role in the regulation of lysosome-mediated degradation of protein aggregates by autophagy in neuronal cells. Deacetylates FOXO1 in response to oxidative stress or serum deprivation, thereby negatively regulating FOXO1-mediated autophagy. Deacetylates a broad range of transcription factors and co-regulators regulating target gene expression. Deacetylates transcriptional factor FOXO3 stimulating the ubiquitin ligase SCF(SKP2)-mediated FOXO3 ubiquitination and degradation. Deacetylates HIF1A and therefore promotes HIF1A degradation and inhibition of HIF1A transcriptional activity in tumor cells in response to hypoxia. Deacetylates RELA in the cytoplasm inhibiting NF-kappaB-dependent transcription activation upon TNF-alpha stimulation. Inhibits transcriptional activation by deacetylating p53/TP53 and EP300. Also deacetylates EIF5A. Functions as a negative regulator on oxidative stress-tolerance in response to anoxia-reoxygenation conditions. Plays a role as tumor suppressor. In addition to protein deacetylase activity, also has activity toward long-chain fatty acyl groups and mediates protein-lysine demyristoylation and depalmitoylation of target proteins, such as ARF6 and KRAS, thereby regulating their association with membranes. The sequence is that of NAD-dependent protein deacetylase sirtuin-2 (SIRT2) from Pongo abelii (Sumatran orangutan).